Consider the following 130-residue polypeptide: Histone H2A type 1-B/E (130 aa).

The disordered stretch occupies residues 1 to 22 (MSGRGKQGGKARAKAKTRSSRA). Serine 2 carries the post-translational modification N-acetylserine. Residue serine 2 is modified to Phosphoserine; by RPS6KA5. At arginine 4 the chain carries Citrulline; alternate. A Symmetric dimethylarginine; by PRMT5; alternate modification is found at arginine 4. N6-(2-hydroxyisobutyryl)lysine; alternate occurs at positions 6 and 10. Lysine 6 bears the N6-acetyllysine; alternate mark. A compositionally biased stretch (basic residues) spans 7–19 (QGGKARAKAKTRS). 2 positions are modified to N6-(beta-hydroxybutyryl)lysine; alternate: lysine 10 and lysine 14. Lysine 10 is modified (N6-lactoyllysine; alternate). Lysine 10 carries the post-translational modification N6-succinyllysine; alternate. A Glycyl lysine isopeptide (Lys-Gly) (interchain with G-Cter in ubiquitin); alternate cross-link involves residue lysine 14. A Glycyl lysine isopeptide (Lys-Gly) (interchain with G-Cter in ubiquitin) cross-link involves residue lysine 16. Lysine 37 is subject to N6-(2-hydroxyisobutyryl)lysine; alternate. N6-(beta-hydroxybutyryl)lysine; alternate is present on lysine 37. The residue at position 37 (lysine 37) is an N6-crotonyllysine; alternate. An N6-(2-hydroxyisobutyryl)lysine mark is found at lysine 75 and lysine 76. Lysine 96 carries the N6-(2-hydroxyisobutyryl)lysine; alternate modification. An N6-(beta-hydroxybutyryl)lysine; alternate modification is found at lysine 96. Residue lysine 96 is modified to N6-succinyllysine; alternate. Lysine 96 bears the N6-glutaryllysine; alternate mark. The residue at position 105 (glutamine 105) is an N5-methylglutamine. Lysine 119 is subject to N6-(2-hydroxyisobutyryl)lysine; alternate. Lysine 119 is subject to N6-(beta-hydroxybutyryl)lysine; alternate. An N6-crotonyllysine; alternate mark is found at lysine 119 and lysine 120. An N6-glutaryllysine; alternate mark is found at lysine 119 and lysine 120. Lysine 120 participates in a covalent cross-link: Glycyl lysine isopeptide (Lys-Gly) (interchain with G-Cter in ubiquitin); alternate. The residue at position 121 (threonine 121) is a Phosphothreonine; by DCAF1. At lysine 126 the chain carries N6-crotonyllysine; alternate. Position 126 is an N6-glutaryllysine; alternate (lysine 126).

This sequence belongs to the histone H2A family. The nucleosome is a histone octamer containing two molecules each of H2A, H2B, H3 and H4 assembled in one H3-H4 heterotetramer and two H2A-H2B heterodimers. The octamer wraps approximately 147 bp of DNA. Deiminated on Arg-4 in granulocytes upon calcium entry. In terms of processing, monoubiquitination of Lys-120 (H2AK119Ub) by RING1, TRIM37 and RNF2/RING2 complex gives a specific tag for epigenetic transcriptional repression and participates in X chromosome inactivation of female mammals. It is involved in the initiation of both imprinted and random X inactivation. Ubiquitinated H2A is enriched in inactive X chromosome chromatin. Ubiquitination of H2A functions downstream of methylation of 'Lys-27' of histone H3 (H3K27me). H2AK119Ub by RNF2/RING2 can also be induced by ultraviolet and may be involved in DNA repair. Monoubiquitination of Lys-120 (H2AK119Ub) by TRIM37 may promote transformation of cells in a number of breast cancers. Following DNA double-strand breaks (DSBs), it is ubiquitinated through 'Lys-63' linkage of ubiquitin moieties by the E2 ligase UBE2N and the E3 ligases RNF8 and RNF168, leading to the recruitment of repair proteins to sites of DNA damage. Ubiquitination at Lys-14 and Lys-16 (H2AK13Ub and H2AK15Ub, respectively) in response to DNA damage is initiated by RNF168 that mediates monoubiquitination at these 2 sites, and 'Lys-63'-linked ubiquitin are then conjugated to monoubiquitin; RNF8 is able to extend 'Lys-63'-linked ubiquitin chains in vitro. Deubiquitinated by USP51 at Lys-14 and Lys-16 (H2AK13Ub and H2AK15Ub, respectively) after damaged DNA is repaired. H2AK119Ub and ionizing radiation-induced 'Lys-63'-linked ubiquitination (H2AK13Ub and H2AK15Ub) are distinct events. Post-translationally, phosphorylation on Ser-2 (H2AS1ph) is enhanced during mitosis. Phosphorylation on Ser-2 by RPS6KA5/MSK1 directly represses transcription. Acetylation of H3 inhibits Ser-2 phosphorylation by RPS6KA5/MSK1. Phosphorylation at Thr-121 (H2AT120ph) by DCAF1 is present in the regulatory region of many tumor suppresor genes and down-regulates their transcription. Glutamine methylation at Gln-105 (H2AQ104me) by FBL is specifically dedicated to polymerase I. It is present at 35S ribosomal DNA locus and impairs binding of the FACT complex. In terms of processing, symmetric dimethylation on Arg-4 by the PRDM1/PRMT5 complex may play a crucial role in the germ-cell lineage. Post-translationally, crotonylation (Kcr) is specifically present in male germ cells and marks testis-specific genes in post-meiotic cells, including X-linked genes that escape sex chromosome inactivation in haploid cells. Crotonylation marks active promoters and enhancers and confers resistance to transcriptional repressors. It is also associated with post-meiotically activated genes on autosomes. Lactylated in macrophages by EP300/P300 by using lactoyl-CoA directly derived from endogenous or exogenous lactate, leading to stimulates gene transcription.

The protein localises to the nucleus. It is found in the chromosome. Core component of nucleosome. Nucleosomes wrap and compact DNA into chromatin, limiting DNA accessibility to the cellular machineries which require DNA as a template. Histones thereby play a central role in transcription regulation, DNA repair, DNA replication and chromosomal stability. DNA accessibility is regulated via a complex set of post-translational modifications of histones, also called histone code, and nucleosome remodeling. This chain is Histone H2A type 1-B/E, found in Homo sapiens (Human).